A 97-amino-acid polypeptide reads, in one-letter code: MDITDIRIKKVDSKNSGSKLLAYVAVTFDNCLVLHNIRVIKGQKGVFIAMPNRRTRVGEYKDIVHPISQDFRKALQTSIFKEYIRENPADLELELDF.

It belongs to the SpoVG family.

Could be involved in septation. This chain is Putative septation protein SpoVG, found in Borreliella burgdorferi (strain ATCC 35210 / DSM 4680 / CIP 102532 / B31) (Borrelia burgdorferi).